We begin with the raw amino-acid sequence, 1015 residues long: Transposase for transposon Tn3 (1015 aa).

Belongs to the transposase 7 family.

In terms of biological role, required for transposition of transposon Tn3. This chain is Transposase for transposon Tn3 (tnpA), found in Escherichia coli.